Here is a 183-residue protein sequence, read N- to C-terminus: Protein jagunal homolog 1 (183 aa).

The Cytoplasmic segment spans residues 1–39; sequence MASRAGPRAAGTDGSDFQHRERVAMHYQMSVTLKYEIKK. Ser-3 is subject to Phosphoserine. Residues 40 to 60 traverse the membrane as a helical segment; it reads LIYVHLVIWLLLVAKMSVGHL. The Lumenal segment spans residues 61–71; the sequence is RLLSHDQVAMP. The chain crosses the membrane as a helical span at residues 72–92; sequence YQWEYPYLLSIVPSVLGLLSF. Residues 93-96 lie on the Cytoplasmic side of the membrane; the sequence is PRNN. A helical transmembrane segment spans residues 97–117; it reads ISYLVLSMISMGLFSIAPLIY. At 118 to 137 the chain is on the lumenal side; the sequence is GSMEMFPAAQQLYRHGKAYR. A helical transmembrane segment spans residues 138-158; it reads FLFGFSAVSVMYLVLVLAVQV. Residues 159-183 lie on the Cytoplasmic side of the membrane; it reads HAWQLYYSKKLLDSWFTSTQEKKRK.

Belongs to the jagunal family. Interacts with COPA, COPB2 and COPG2.

The protein resides in the endoplasmic reticulum membrane. Its function is as follows. Endoplasmic reticulum transmembrane protein involved in vesicle-mediated transport, which is required for neutrophil function. Required for vesicle-mediated transport; it is however unclear whether it is involved in early secretory pathway or intracellular protein transport. Acts as a regulator of neutrophil function, probably via its role in vesicle-mediated transport: required for defense against fungal pathogens and for granulocyte colony-stimulating factor (GM-CSF) signaling pathway; possibly by regulating glycosylation and/or targeting of proteins contributing to the viability and migration of neutrophils. The protein is Protein jagunal homolog 1 of Mus musculus (Mouse).